A 109-amino-acid polypeptide reads, in one-letter code: Nucleoid-associated protein Spro_1136 (109 aa).

Disordered regions lie at residues 1–21 and 90–109; these read MFGK…QEKM and EKMA…KMPF. A compositionally biased stretch (low complexity) spans 11-21; sequence MKQAQQMQEKM.

Belongs to the YbaB/EbfC family. In terms of assembly, homodimer.

The protein resides in the cytoplasm. Its subcellular location is the nucleoid. Functionally, binds to DNA and alters its conformation. May be involved in regulation of gene expression, nucleoid organization and DNA protection. The polypeptide is Nucleoid-associated protein Spro_1136 (Serratia proteamaculans (strain 568)).